A 168-amino-acid chain; its full sequence is Photosystem I assembly protein Ycf3 (168 aa).

3 TPR repeats span residues 35–68 (AFTY…EIDP), 72–105 (SYIL…NPFL), and 120–153 (GEQA…TPGN).

This sequence belongs to the Ycf3 family.

It is found in the plastid. It localises to the chloroplast thylakoid membrane. Functionally, essential for the assembly of the photosystem I (PSI) complex. May act as a chaperone-like factor to guide the assembly of the PSI subunits. This chain is Photosystem I assembly protein Ycf3, found in Daucus carota (Wild carrot).